Here is a 256-residue protein sequence, read N- to C-terminus: Ribonuclease 3 (256 aa).

An RNase III domain is found at 3–125 (LDALQQRLGY…IVGAVFLDAG (123 aa)). Residue Glu38 participates in Mg(2+) binding. The active site involves Asp42. Residues Asp111 and Glu114 each coordinate Mg(2+). Glu114 is an active-site residue. The DRBM domain occupies 152–222 (DAKTLLQEYL…AKLALDEVQK (71 aa)). The interval 229-256 (KRSRAERTGKTRKQPVPPDPQLSLRLKE) is disordered.

Belongs to the ribonuclease III family. Homodimer. Mg(2+) serves as cofactor.

It is found in the cytoplasm. The enzyme catalyses Endonucleolytic cleavage to 5'-phosphomonoester.. Digests double-stranded RNA. Involved in the processing of primary rRNA transcript to yield the immediate precursors to the large and small rRNAs (23S and 16S). Processes some mRNAs, and tRNAs when they are encoded in the rRNA operon. Processes pre-crRNA and tracrRNA of type II CRISPR loci if present in the organism. In Cupriavidus pinatubonensis (strain JMP 134 / LMG 1197) (Cupriavidus necator (strain JMP 134)), this protein is Ribonuclease 3.